A 485-amino-acid polypeptide reads, in one-letter code: Peptidyl-prolyl isomerase CWC27 (485 aa).

Residues 11–167 form the PPIase cyclophilin-type domain; it reads SSGLVDLVTS…YPIKLHEVRV (157 aa). A disordered region spans residues 173-485; sequence DDLQPRTTKK…PQQRRQRSII (313 aa). Basic and acidic residues-rich tracts occupy residues 184–204 and 236–247; these read RIAE…EEQK and SSHDLLKDDKHL. Composition is skewed to polar residues over residues 249 to 270, 278 to 292, 315 to 325, and 353 to 370; these read RQTI…ANIS, AQSS…VTKQ, PSDQKASSSTG, and ALLS…STTP. Acidic residues predominate over residues 381–398; the sequence is DEVEEEAGEYGASDDDDD. Positions 428–465 are enriched in basic and acidic residues; sequence LDPRDHTDRERNPKAESSRDGKRGRDWVEHDRKYQNDR. Positions 466–485 are enriched in basic residues; that stretch reads SRRHREHDKHPQQRRQRSII.

This sequence belongs to the cyclophilin-type PPIase family. CWC27 subfamily. In terms of assembly, associated with the spliceosome.

Its subcellular location is the cytoplasm. The protein resides in the nucleus. It catalyses the reaction [protein]-peptidylproline (omega=180) = [protein]-peptidylproline (omega=0). Its function is as follows. PPIases accelerate the folding of proteins. It catalyzes the cis-trans isomerization of proline imidic peptide bonds in oligopeptides. Involved in pre-mRNA splicing. The sequence is that of Peptidyl-prolyl isomerase CWC27 (CWC27) from Mycosarcoma maydis (Corn smut fungus).